The primary structure comprises 253 residues: H repeat-associated putative transposase YbfD (253 aa).

Belongs to the transposase 11 family.

The polypeptide is H repeat-associated putative transposase YbfD (ybfD) (Escherichia coli (strain K12)).